A 295-amino-acid chain; its full sequence is UDP-N-acetylenolpyruvoylglucosamine reductase (295 aa).

The region spanning 24–188 (KVGGNAEIFF…LKAIFKANKG (165 aa)) is the FAD-binding PCMH-type domain. The active site involves arginine 168. The active-site Proton donor is serine 217. The active site involves glutamate 287.

It belongs to the MurB family. FAD serves as cofactor.

The protein localises to the cytoplasm. The enzyme catalyses UDP-N-acetyl-alpha-D-muramate + NADP(+) = UDP-N-acetyl-3-O-(1-carboxyvinyl)-alpha-D-glucosamine + NADPH + H(+). It functions in the pathway cell wall biogenesis; peptidoglycan biosynthesis. In terms of biological role, cell wall formation. The protein is UDP-N-acetylenolpyruvoylglucosamine reductase of Rickettsia typhi (strain ATCC VR-144 / Wilmington).